We begin with the raw amino-acid sequence, 110 residues long: Small ribosomal subunit protein uS10 (110 aa).

This sequence belongs to the universal ribosomal protein uS10 family. As to quaternary structure, part of the 30S ribosomal subunit.

Involved in the binding of tRNA to the ribosomes. This is Small ribosomal subunit protein uS10 from Coxiella burnetii (strain Dugway 5J108-111).